The following is a 252-amino-acid chain: Type III pantothenate kinase (252 aa).

An ATP-binding site is contributed by 6-13; it reads DIGNTNTV. A substrate-binding site is contributed by 105–108; sequence GADR. The Proton acceptor role is filled by Asp107. Asp127 is a K(+) binding site. Thr130 is an ATP binding site. Residue Thr182 coordinates substrate.

It belongs to the type III pantothenate kinase family. Homodimer. The cofactor is NH4(+). K(+) serves as cofactor.

It localises to the cytoplasm. The enzyme catalyses (R)-pantothenate + ATP = (R)-4'-phosphopantothenate + ADP + H(+). The protein operates within cofactor biosynthesis; coenzyme A biosynthesis; CoA from (R)-pantothenate: step 1/5. Catalyzes the phosphorylation of pantothenate (Pan), the first step in CoA biosynthesis. This chain is Type III pantothenate kinase, found in Salinispora arenicola (strain CNS-205).